We begin with the raw amino-acid sequence, 379 residues long: tRNA 2-selenouridine synthase (379 aa).

One can recognise a Rhodanese domain in the interval 15–138 (FQQNIPLMDV…ARNYLIKQIE (124 aa)). Residue Cys98 is the S-selanylcysteine intermediate of the active site.

Belongs to the SelU family. In terms of assembly, monomer.

It catalyses the reaction 5-methylaminomethyl-2-thiouridine(34) in tRNA + selenophosphate + (2E)-geranyl diphosphate + H2O + H(+) = 5-methylaminomethyl-2-selenouridine(34) in tRNA + (2E)-thiogeraniol + phosphate + diphosphate. It carries out the reaction 5-methylaminomethyl-2-thiouridine(34) in tRNA + (2E)-geranyl diphosphate = 5-methylaminomethyl-S-(2E)-geranyl-thiouridine(34) in tRNA + diphosphate. The enzyme catalyses 5-methylaminomethyl-S-(2E)-geranyl-thiouridine(34) in tRNA + selenophosphate + H(+) = 5-methylaminomethyl-2-(Se-phospho)selenouridine(34) in tRNA + (2E)-thiogeraniol. The catalysed reaction is 5-methylaminomethyl-2-(Se-phospho)selenouridine(34) in tRNA + H2O = 5-methylaminomethyl-2-selenouridine(34) in tRNA + phosphate. In terms of biological role, involved in the post-transcriptional modification of the uridine at the wobble position (U34) of tRNA(Lys), tRNA(Glu) and tRNA(Gln). Catalyzes the conversion of 2-thiouridine (S2U-RNA) to 2-selenouridine (Se2U-RNA). Acts in a two-step process involving geranylation of 2-thiouridine (S2U) to S-geranyl-2-thiouridine (geS2U) and subsequent selenation of the latter derivative to 2-selenouridine (Se2U) in the tRNA chain. This Bdellovibrio bacteriovorus (strain ATCC 15356 / DSM 50701 / NCIMB 9529 / HD100) protein is tRNA 2-selenouridine synthase.